We begin with the raw amino-acid sequence, 478 residues long: Sulfate adenylyltransferase subunit 1 (478 aa).

The 217-residue stretch at 24-240 (KSMLRFLTCG…VLEDIDIDAD (217 aa)) folds into the tr-type G domain. Residues 33–40 (GSVDDGKS) form a G1 region. Residue 33–40 (GSVDDGKS) participates in GTP binding. Positions 91 to 95 (GITID) are G2. The G3 stretch occupies residues 112 to 115 (DTPG). GTP-binding positions include 112–116 (DTPGH) and 167–170 (NKMD). The tract at residues 167–170 (NKMD) is G4. The interval 206 to 208 (SAL) is G5.

This sequence belongs to the TRAFAC class translation factor GTPase superfamily. Classic translation factor GTPase family. CysN/NodQ subfamily. As to quaternary structure, heterodimer composed of CysD, the smaller subunit, and CysN.

The enzyme catalyses sulfate + ATP + H(+) = adenosine 5'-phosphosulfate + diphosphate. It functions in the pathway sulfur metabolism; hydrogen sulfide biosynthesis; sulfite from sulfate: step 1/3. Its function is as follows. With CysD forms the ATP sulfurylase (ATPS) that catalyzes the adenylation of sulfate producing adenosine 5'-phosphosulfate (APS) and diphosphate, the first enzymatic step in sulfur assimilation pathway. APS synthesis involves the formation of a high-energy phosphoric-sulfuric acid anhydride bond driven by GTP hydrolysis by CysN coupled to ATP hydrolysis by CysD. The chain is Sulfate adenylyltransferase subunit 1 from Aliivibrio salmonicida (strain LFI1238) (Vibrio salmonicida (strain LFI1238)).